Here is a 211-residue protein sequence, read N- to C-terminus: Arginine exporter protein ArgO (211 aa).

6 helical membrane passes run 1–21 (MFTY…PLGP), 37–57 (LMIA…GIFG), 68–88 (LLAI…FGAL), 111–131 (IIIT…DTFV), 147–167 (WFAL…ALLA), and 182–202 (IINI…AKEG).

It belongs to the LysE/ArgO transporter (TC 2.A.75) family.

The protein localises to the cell inner membrane. It carries out the reaction L-arginine(in) = L-arginine(out). Its function is as follows. Involved in the export of arginine. Important to control the intracellular level of arginine and the correct balance between arginine and lysine. This Klebsiella pneumoniae (strain 342) protein is Arginine exporter protein ArgO.